Consider the following 306-residue polypeptide: Glutaminase (306 aa).

S64, N115, E159, N166, Y190, Y242, and V260 together coordinate substrate.

The protein belongs to the glutaminase family. As to quaternary structure, homotetramer.

The enzyme catalyses L-glutamine + H2O = L-glutamate + NH4(+). This is Glutaminase from Photobacterium profundum (strain SS9).